An 88-amino-acid chain; its full sequence is Small ribosomal subunit protein bS20 (88 aa).

The protein belongs to the bacterial ribosomal protein bS20 family.

In terms of biological role, binds directly to 16S ribosomal RNA. The protein is Small ribosomal subunit protein bS20 of Natranaerobius thermophilus (strain ATCC BAA-1301 / DSM 18059 / JW/NM-WN-LF).